The primary structure comprises 346 residues: Holliday junction branch migration complex subunit RuvB (346 aa).

The interval methionine 1–tyrosine 183 is large ATPase domain (RuvB-L). ATP-binding positions include isoleucine 22, arginine 23, glycine 64, lysine 67, threonine 68, threonine 69, glutamate 130 to phenylalanine 132, arginine 173, tyrosine 183, and arginine 220. Threonine 68 lines the Mg(2+) pocket. A small ATPAse domain (RuvB-S) region spans residues serine 184 to lysine 254. The head domain (RuvB-H) stretch occupies residues proline 257–phenylalanine 346. DNA-binding residues include arginine 293, arginine 312, and arginine 317.

It belongs to the RuvB family. In terms of assembly, homohexamer. Forms an RuvA(8)-RuvB(12)-Holliday junction (HJ) complex. HJ DNA is sandwiched between 2 RuvA tetramers; dsDNA enters through RuvA and exits via RuvB. An RuvB hexamer assembles on each DNA strand where it exits the tetramer. Each RuvB hexamer is contacted by two RuvA subunits (via domain III) on 2 adjacent RuvB subunits; this complex drives branch migration. In the full resolvosome a probable DNA-RuvA(4)-RuvB(12)-RuvC(2) complex forms which resolves the HJ.

The protein localises to the cytoplasm. It carries out the reaction ATP + H2O = ADP + phosphate + H(+). The RuvA-RuvB-RuvC complex processes Holliday junction (HJ) DNA during genetic recombination and DNA repair, while the RuvA-RuvB complex plays an important role in the rescue of blocked DNA replication forks via replication fork reversal (RFR). RuvA specifically binds to HJ cruciform DNA, conferring on it an open structure. The RuvB hexamer acts as an ATP-dependent pump, pulling dsDNA into and through the RuvAB complex. RuvB forms 2 homohexamers on either side of HJ DNA bound by 1 or 2 RuvA tetramers; 4 subunits per hexamer contact DNA at a time. Coordinated motions by a converter formed by DNA-disengaged RuvB subunits stimulates ATP hydrolysis and nucleotide exchange. Immobilization of the converter enables RuvB to convert the ATP-contained energy into a lever motion, pulling 2 nucleotides of DNA out of the RuvA tetramer per ATP hydrolyzed, thus driving DNA branch migration. The RuvB motors rotate together with the DNA substrate, which together with the progressing nucleotide cycle form the mechanistic basis for DNA recombination by continuous HJ branch migration. Branch migration allows RuvC to scan DNA until it finds its consensus sequence, where it cleaves and resolves cruciform DNA. This Xanthomonas axonopodis pv. citri (strain 306) protein is Holliday junction branch migration complex subunit RuvB.